The following is a 622-amino-acid chain: Cilia- and flagella-associated protein 206 (622 aa).

It belongs to the CFAP206 family.

The protein localises to the cytoplasm. Its subcellular location is the cytoskeleton. It is found in the cilium axoneme. It localises to the cilium basal body. Functionally, essential for sperm motility and is involved in the regulation of the beating frequency of motile cilia on the epithelial cells of the respiratory tract. Required for the establishment of radial spokes in sperm flagella. This is Cilia- and flagella-associated protein 206 from Bos taurus (Bovine).